The primary structure comprises 324 residues: Viral cathepsin (324 aa).

A signal peptide spans 1–16; it reads MNKIVLYLLVYGAVQC. A propeptide spans 17 to 113 (activation peptide); it reads AAYDVLKAPN…VVLDRPPDKG (97 aa). Disulfide bonds link C134–C175, C168–C208, and C263–C311. C137 is a catalytic residue. N159 carries N-linked (GlcNAc...) asparagine; by host glycosylation. Residues H270 and N290 contribute to the active site.

Belongs to the peptidase C1 family. Synthesized as an inactive proenzyme and activated by proteolytic removal of the inhibitory propeptide.

The catalysed reaction is Endopeptidase of broad specificity, hydrolyzing substrates of both cathepsin L and cathepsin B.. Cysteine protease that plays an essential role in host liquefaction to facilitate horizontal transmission of the virus. May participate in the degradation of foreign protein expressed by the baculovirus system. In Choristoneura fumiferana nuclear polyhedrosis virus (CfMNPV), this protein is Viral cathepsin (Vcath).